The following is a 447-amino-acid chain: Succinate--CoA ligase [ADP-forming] subunit beta, mitochondrial (447 aa).

The N-terminal 34 residues, 1 to 34 (MFKLGRNRALASAFAATSRAPLASRLPSVSQQQR), are a transit peptide targeting the mitochondrion. In terms of domain architecture, ATP-grasp spans 45–287 (ADLLRQYGIG…TTQEDPDEVR (243 aa)). Residues Lys82, 89 to 91 (GRG), and Glu150 each bind ATP. Positions 242 and 256 each coordinate Mg(2+). Substrate is bound by residues Asn307 and 364–366 (GIV).

This sequence belongs to the succinate/malate CoA ligase beta subunit family. As to quaternary structure, heterodimer of an alpha and a beta subunit. It depends on Mg(2+) as a cofactor.

The protein localises to the mitochondrion. It catalyses the reaction succinate + ATP + CoA = succinyl-CoA + ADP + phosphate. The protein operates within carbohydrate metabolism; tricarboxylic acid cycle; succinate from succinyl-CoA (ligase route): step 1/1. Succinyl-CoA synthetase functions in the citric acid cycle (TCA), coupling the hydrolysis of succinyl-CoA to the synthesis of ATP and thus represents the only step of substrate-level phosphorylation in the TCA. The beta subunit provides nucleotide specificity of the enzyme and binds the substrate succinate, while the binding sites for coenzyme A and phosphate are found in the alpha subunit. This is Succinate--CoA ligase [ADP-forming] subunit beta, mitochondrial from Neurospora crassa (strain ATCC 24698 / 74-OR23-1A / CBS 708.71 / DSM 1257 / FGSC 987).